Here is a 189-residue protein sequence, read N- to C-terminus: Interferon alpha-14 (189 aa).

A signal peptide spans 1–23 (MALPFALMMALVVLSCKSSCSLG). 2 disulfides stabilise this stretch: Cys-24-Cys-122 and Cys-52-Cys-162. N-linked (GlcNAc...) asparagine glycosylation is present at Asn-95.

This sequence belongs to the alpha/beta interferon family.

It localises to the secreted. Produced by macrophages, IFN-alpha have antiviral activities. Interferon stimulates the production of two enzymes: a protein kinase and an oligoadenylate synthetase. This Homo sapiens (Human) protein is Interferon alpha-14 (IFNA14).